The sequence spans 240 residues: Phosphatidylserine decarboxylase proenzyme (240 aa).

The active-site Schiff-base intermediate with substrate; via pyruvic acid is S198. S198 bears the Pyruvic acid (Ser); by autocatalysis mark.

It belongs to the phosphatidylserine decarboxylase family. PSD-A subfamily. Heterodimer of a large membrane-associated beta subunit and a small pyruvoyl-containing alpha subunit. It depends on pyruvate as a cofactor. Post-translationally, is synthesized initially as an inactive proenzyme. Formation of the active enzyme involves a self-maturation process in which the active site pyruvoyl group is generated from an internal serine residue via an autocatalytic post-translational modification. Two non-identical subunits are generated from the proenzyme in this reaction, and the pyruvate is formed at the N-terminus of the alpha chain, which is derived from the carboxyl end of the proenzyme. The post-translation cleavage follows an unusual pathway, termed non-hydrolytic serinolysis, in which the side chain hydroxyl group of the serine supplies its oxygen atom to form the C-terminus of the beta chain, while the remainder of the serine residue undergoes an oxidative deamination to produce ammonia and the pyruvoyl prosthetic group on the alpha chain.

The protein resides in the cell membrane. The catalysed reaction is a 1,2-diacyl-sn-glycero-3-phospho-L-serine + H(+) = a 1,2-diacyl-sn-glycero-3-phosphoethanolamine + CO2. It participates in phospholipid metabolism; phosphatidylethanolamine biosynthesis; phosphatidylethanolamine from CDP-diacylglycerol: step 2/2. In terms of biological role, catalyzes the formation of phosphatidylethanolamine (PtdEtn) from phosphatidylserine (PtdSer). This chain is Phosphatidylserine decarboxylase proenzyme, found in Paramagnetospirillum magneticum (strain ATCC 700264 / AMB-1) (Magnetospirillum magneticum).